The following is a 380-amino-acid chain: Cytochrome b (380 aa).

Transmembrane regions (helical) follow at residues 34 to 54 (FGSL…FLAM), 78 to 99 (WLLR…YFHI), 114 to 134 (WNIG…GYVL), and 179 to 199 (FFTF…IHLL). 2 residues coordinate heme b: H84 and H98. The heme b site is built by H183 and H197. H202 is a binding site for a ubiquinone. The next 4 membrane-spanning stretches (helical) occupy residues 227–247 (YKDL…STFA), 289–309 (LGGV…PIIH), 321–341 (IAKT…WIGG), and 348–368 (FITI…LLIP).

Belongs to the cytochrome b family. In terms of assembly, the cytochrome bc1 complex contains 3 respiratory subunits (MT-CYB, CYC1 and UQCRFS1), 2 core proteins (UQCRC1 and UQCRC2) and probably 6 low-molecular weight proteins. Requires heme b as cofactor.

It is found in the mitochondrion inner membrane. Its function is as follows. Component of the ubiquinol-cytochrome c reductase complex (complex III or cytochrome b-c1 complex) that is part of the mitochondrial respiratory chain. The b-c1 complex mediates electron transfer from ubiquinol to cytochrome c. Contributes to the generation of a proton gradient across the mitochondrial membrane that is then used for ATP synthesis. In Rana amurensis (Siberian wood frog), this protein is Cytochrome b (mt-cyb).